We begin with the raw amino-acid sequence, 386 residues long: Rhomboid domain-containing protein 3 (386 aa).

The next 5 membrane-spanning stretches (helical) occupy residues 20–40 (VLML…LVLA), 58–78 (LGHT…TVGW), 92–112 (ASAL…GLGL), 141–161 (GALP…LLSS), and 163–183 (PPFL…AGAF). Positions 324 to 362 (VSSLRLQQLERMGFPTEQAVVALAATGRVEGAVSLLVGG) constitute a UBA domain.

The protein resides in the membrane. The protein is Rhomboid domain-containing protein 3 (RHBDD3) of Homo sapiens (Human).